The chain runs to 327 residues: Methionyl-tRNA formyltransferase (327 aa).

121–124 (SLLP) lines the (6S)-5,6,7,8-tetrahydrofolate pocket.

This sequence belongs to the Fmt family.

It carries out the reaction L-methionyl-tRNA(fMet) + (6R)-10-formyltetrahydrofolate = N-formyl-L-methionyl-tRNA(fMet) + (6S)-5,6,7,8-tetrahydrofolate + H(+). Functionally, attaches a formyl group to the free amino group of methionyl-tRNA(fMet). The formyl group appears to play a dual role in the initiator identity of N-formylmethionyl-tRNA by promoting its recognition by IF2 and preventing the misappropriation of this tRNA by the elongation apparatus. This Burkholderia multivorans (strain ATCC 17616 / 249) protein is Methionyl-tRNA formyltransferase.